Consider the following 513-residue polypeptide: L-threonine dehydratase biosynthetic IlvA (513 aa).

Residue Lys-63 is modified to N6-(pyridoxal phosphate)lysine. Pyridoxal 5'-phosphate contacts are provided by residues Asn-90, 189 to 193 (GGGGL), and Ser-316. ACT-like domains follow at residues 340 to 411 (ALLA…DMSD) and 433 to 504 (RLYT…DVTK).

Belongs to the serine/threonine dehydratase family. As to quaternary structure, homotetramer. It depends on pyridoxal 5'-phosphate as a cofactor.

It carries out the reaction L-threonine = 2-oxobutanoate + NH4(+). It functions in the pathway amino-acid biosynthesis; L-isoleucine biosynthesis; 2-oxobutanoate from L-threonine: step 1/1. Functionally, catalyzes the anaerobic formation of alpha-ketobutyrate and ammonia from threonine in a two-step reaction. The first step involved a dehydration of threonine and a production of enamine intermediates (aminocrotonate), which tautomerizes to its imine form (iminobutyrate). Both intermediates are unstable and short-lived. The second step is the nonenzymatic hydrolysis of the enamine/imine intermediates to form 2-ketobutyrate and free ammonia. In the low water environment of the cell, the second step is accelerated by RidA. The protein is L-threonine dehydratase biosynthetic IlvA (ilvA) of Haemophilus influenzae (strain ATCC 51907 / DSM 11121 / KW20 / Rd).